Here is a 151-residue protein sequence, read N- to C-terminus: tRNA-specific adenosine deaminase (151 aa).

In terms of domain architecture, CMP/dCMP-type deaminase spans 4 to 122 (NRDSYWMKIA…PFLKKIFINL (119 aa)). Zn(2+) is bound at residue His-55. Glu-57 (proton donor) is an active-site residue. Positions 85 and 88 each coordinate Zn(2+).

It belongs to the cytidine and deoxycytidylate deaminase family. In terms of assembly, homodimer. Zn(2+) serves as cofactor.

It carries out the reaction adenosine(34) in tRNA + H2O + H(+) = inosine(34) in tRNA + NH4(+). Its function is as follows. Catalyzes the deamination of adenosine to inosine at the wobble position 34 of tRNA(Arg2). The protein is tRNA-specific adenosine deaminase of Buchnera aphidicola subsp. Schizaphis graminum (strain Sg).